Here is a 299-residue protein sequence, read N- to C-terminus: Taste receptor type 2 member 50 (299 aa).

Methionine 1 is a topological domain (extracellular). Residues 2–22 (ITFLYIFFSILIMVLFVLGNF) traverse the membrane as a helical segment. The Cytoplasmic portion of the chain corresponds to 23 to 55 (ANGFIALVNFIDWVKRKKISSADQILTALAVSR). A helical transmembrane segment spans residues 56–76 (IGLLWALLLNWYLTVLNPAFY). The Extracellular portion of the chain corresponds to 77 to 87 (SVELRITSYNA). The chain crosses the membrane as a helical span at residues 88–108 (WVVTNHFSMWLAANLSIFYLL). At 109–126 (KIANFSNLLFLHLKRRVR) the chain is on the cytoplasmic side. Residues 127–147 (SVILVILLGTLIFLVCHLLVA) traverse the membrane as a helical segment. The Extracellular portion of the chain corresponds to 148–181 (NMDESMWAEEYEGNMTGKMKLRNTVHLSYLTVTT). Asparagine 161 carries an N-linked (GlcNAc...) asparagine glycan. A helical membrane pass occupies residues 182–202 (LWSFIPFTLSLISFLMLICSL). Over 203–229 (CKHLKKMQLHGEGSQDLSTKVHIKALQ) the chain is Cytoplasmic. The helical transmembrane segment at 230 to 250 (TLISFLLLCAIFFLFLIVSVW) threads the bilayer. At 251 to 259 (SPRRLRNDP) the chain is on the extracellular side. A helical membrane pass occupies residues 260 to 280 (VVMVSKAVGNIYLAFDSFILI). Topologically, residues 281 to 299 (WRTKKLKHTFLLILCQIRC) are cytoplasmic.

It belongs to the G-protein coupled receptor T2R family. In terms of tissue distribution, expressed in subsets of taste receptor cells of the tongue and exclusively in gustducin-positive cells.

It localises to the membrane. Receptor that may play a role in the perception of bitterness and is gustducin-linked. May play a role in sensing the chemical composition of the gastrointestinal content. The activity of this receptor may stimulate alpha gustducin, mediate PLC-beta-2 activation and lead to the gating of TRPM5. The sequence is that of Taste receptor type 2 member 50 (TAS2R50) from Homo sapiens (Human).